Consider the following 376-residue polypeptide: Phosphoglycerate kinase (376 aa).

(2R)-3-phosphoglycerate-binding residues include Val-1, Asp-2, Phe-3, Asn-4, Arg-17, Ser-40, His-41, Gly-43, Arg-44, Leu-99, Arg-100, His-147, and Arg-148. Gly-191 serves as a coordination point for ADP. CDP is bound at residue Gly-191. AMP-binding residues include Ala-192 and Lys-193. Ala-192 is an ATP binding site. Ala-192 lines the Mg(2+) pocket. Asp-196 contacts CDP. Position 196 (Asp-196) interacts with Mg(2+). Lys-197 serves as a coordination point for AMP. Lys-197 provides a ligand contact to ATP. Gly-215 contributes to the ADP binding site. A CDP-binding site is contributed by Gly-215. AMP is bound by residues Gly-216 and Gly-290. Positions 216 and 290 each coordinate ATP. The CDP site is built by Gly-315 and Phe-320. Phe-320 provides a ligand contact to ADP. Glu-321 is a binding site for AMP. Glu-321, Asp-352, and Thr-353 together coordinate ATP. Asp-352 is a binding site for Mg(2+).

The protein belongs to the phosphoglycerate kinase family. Monomer. It depends on Mg(2+) as a cofactor.

The enzyme catalyses (2R)-3-phosphoglycerate + ATP = (2R)-3-phospho-glyceroyl phosphate + ADP. It functions in the pathway carbohydrate degradation; glycolysis; pyruvate from D-glyceraldehyde 3-phosphate: step 2/5. The sequence is that of Phosphoglycerate kinase (PGK) from Glaucoma chattoni.